Reading from the N-terminus, the 509-residue chain is Lysophospholipid acyltransferase (509 aa).

At 1–14 the chain is on the lumenal side; the sequence is MAYLIDIPFEYFSS. The helical transmembrane segment at 15-35 threads the bilayer; sequence FLGVHPDQLKLLFCFLSAYPF. The Cytoplasmic segment spans residues 36 to 55; it reads AGILKRLPSAPWIRNLFSIS. The chain crosses the membrane as a helical span at residues 56 to 76; it reads IGLFYLIGVHHLYDGVLVLLF. The Lumenal segment spans residues 77 to 94; sequence DALFTYFVAAFYRSSRMP. Residues 95–115 form a helical membrane-spanning segment; sequence WIIFIVILGHTFSSHVIRYIY. The Cytoplasmic portion of the chain corresponds to 116–223; it reads PSENTDITAS…LEPALGRCWR (108 aa). Residues 224-244 form a helical membrane-spanning segment; the sequence is GLLWLILFITGSSIYPLKFLL. At 245-246 the chain is on the lumenal side; sequence TP. Residues 247-267 traverse the membrane as a helical segment; that stretch reads KFASSPILLKYGYVCITAFVA. The Cytoplasmic segment spans residues 268–410; it reads RMKYYGAWEL…TPGPFKRVYD (143 aa). His363 is an active-site residue. A helical membrane pass occupies residues 411 to 431; the sequence is VIGMVATNLSLSYLIISFLLL. The Lumenal portion of the chain corresponds to 432 to 441; the sequence is NLKESIHVWK. The helical transmembrane segment at 442 to 462 threads the bilayer; it reads ELYFIVHIYILIALAVFNSPI. Residues 463–509 are Cytoplasmic-facing; that stretch reads RSKLDNKIRSRVNSYKLKSYEQSMKSTSDTDMLNMSVPKREDFENDE. Residues 488–509 form a disordered region; it reads STSDTDMLNMSVPKREDFENDE. Residue Ser490 is modified to Phosphoserine. Residues 500–509 show a composition bias toward basic and acidic residues; that stretch reads PKREDFENDE.

Belongs to the membrane-bound acyltransferase family.

It is found in the endoplasmic reticulum membrane. The protein resides in the microsome membrane. The enzyme catalyses a 1-acyl-sn-glycero-3-phosphate + an acyl-CoA = a 1,2-diacyl-sn-glycero-3-phosphate + CoA. It catalyses the reaction a 1-acyl-sn-glycero-3-phosphocholine + an acyl-CoA = a 1,2-diacyl-sn-glycero-3-phosphocholine + CoA. The catalysed reaction is a 1-acyl-sn-glycero-3-phosphoethanolamine + an acyl-CoA = a 1,2-diacyl-sn-glycero-3-phosphoethanolamine + CoA. Membrane-bound O-acyltransferase that mediates the incorporation of unsaturated acyl chains into the sn-2 position of phospholipids. The polypeptide is Lysophospholipid acyltransferase (ale1) (Schizosaccharomyces pombe (strain 972 / ATCC 24843) (Fission yeast)).